A 1265-amino-acid polypeptide reads, in one-letter code: Cohesin subunit SA-1 (1265 aa).

A compositionally biased stretch (polar residues) spans 1–16 (MITSELSVLQDSTNES). Disordered regions lie at residues 1-21 (MITS…VMHT) and 37-91 (DLEV…EGDP). Over residues 62–73 (TPGDRSRAEPGS) the composition is skewed to basic and acidic residues. The region spanning 303-388 (FVHRYRDAIA…NRFKDRIVSM (86 aa)) is the SCD domain. Disordered regions lie at residues 1063-1097 (GDED…KRVI) and 1111-1130 (DTIQ…TVLR). Low complexity predominate over residues 1069 to 1082 (SVNSGGSNSKGSSV). Positions 1083 to 1095 (RSKKGRPPLHKKR) are enriched in basic residues. The segment covering 1111-1129 (DTIQTPGALTTPQLTSTVL) has biased composition (polar residues).

It belongs to the SCC3 family. Interacts directly with RAD21 in cohesin complex. Cohesin complexes are composed of a heterodimer between and SMC3, which are attached via their hinge domain, and RAD21 which link them at their heads, and one STAG protein (STAG1 OR STAG2). In cohesin complexes, STAG1 is mutually exclusive with STAG2. Phosphorylated by PLK1. The large dissociation of cohesin from chromosome arms during prophase is partly due to its phosphorylation.

It localises to the nucleus. Its subcellular location is the chromosome. The protein resides in the centromere. Functionally, component of cohesin complex, a complex required for the cohesion of sister chromatids after DNA replication. The cohesin complex apparently forms a large proteinaceous ring within which sister chromatids can be trapped. At anaphase, the complex is cleaved and dissociates from chromatin, allowing sister chromatids to segregate. The cohesin complex may also play a role in spindle pole assembly during mitosis. In Xenopus laevis (African clawed frog), this protein is Cohesin subunit SA-1 (stag1).